The sequence spans 64 residues: Large ribosomal subunit protein bL35 (64 aa).

This sequence belongs to the bacterial ribosomal protein bL35 family.

This is Large ribosomal subunit protein bL35 from Desulforudis audaxviator (strain MP104C).